The sequence spans 157 residues: Transcription elongation factor GreA (157 aa).

The stretch at 46 to 67 (AEYHAARERQSFIEGRIKELED) forms a coiled coil.

The protein belongs to the GreA/GreB family.

In terms of biological role, necessary for efficient RNA polymerase transcription elongation past template-encoded arresting sites. The arresting sites in DNA have the property of trapping a certain fraction of elongating RNA polymerases that pass through, resulting in locked ternary complexes. Cleavage of the nascent transcript by cleavage factors such as GreA or GreB allows the resumption of elongation from the new 3'terminus. GreA releases sequences of 2 to 3 nucleotides. This Rhodospirillum rubrum (strain ATCC 11170 / ATH 1.1.1 / DSM 467 / LMG 4362 / NCIMB 8255 / S1) protein is Transcription elongation factor GreA.